The primary structure comprises 604 residues: 2-isopropylmalate synthase 2, mitochondrial (604 aa).

A mitochondrion-targeting transit peptide spans 1 to 50; sequence MVKHSFIALAEHASKLRRSIPPVKLTYKNMLRDPSVKYRAFAPPKMVKRI. The 276-residue stretch at 60-335 folds into the Pyruvate carboxyltransferase domain; it reads PRWLSTDLRD…SPNLDFSDLT (276 aa). The a divalent metal cation site is built by Asp69, His274, His276, and Asn310.

The protein belongs to the alpha-IPM synthase/homocitrate synthase family. LeuA type 2 subfamily. In terms of assembly, homodimer. A divalent metal cation serves as cofactor.

The protein localises to the mitochondrion. It catalyses the reaction 3-methyl-2-oxobutanoate + acetyl-CoA + H2O = (2S)-2-isopropylmalate + CoA + H(+). It participates in amino-acid biosynthesis; L-leucine biosynthesis; L-leucine from 3-methyl-2-oxobutanoate: step 1/4. Functionally, catalyzes the condensation of the acetyl group of acetyl-CoA with 3-methyl-2-oxobutanoate (2-oxoisovalerate) to form 3-carboxy-3-hydroxy-4-methylpentanoate (2-isopropylmalate). Redundant to LEU4, responsible for about 20% of alpha-IPMS activity. Involved in leucine synthesis. This Saccharomyces cerevisiae (strain ATCC 204508 / S288c) (Baker's yeast) protein is 2-isopropylmalate synthase 2, mitochondrial.